A 435-amino-acid polypeptide reads, in one-letter code: MLDIQLLRKDIDAVAQRLATRGFQLDVALFQALEAERKQLQTQTEDLQARRNSLSKQIGMLKGKGEDASGPMAEVAGIGDTLKASAQRLAEIQDQISDAMLSIPNLPHESVPTGKDETENVEVRRVGTPRTFDFEIKDHVDVGARLGLDFETATKVTGSRFAFLRGGVARMHRALVQLMVDTHTLEHGYTEMYVPYIVNAASMRGTGQLPKFEDDLFKVPRKVGGEDGQDAIENFYLIPTAEVPLTNVVRDAIVAAEKLPLRFVAHTPCFRSEAGSYGKDTRGMIRQHQFDKVEMVQVVPSEQSMDALEQMTGHAETILKKLELPFRTVVLCTGDMGFGSTKTYDIEVWIPAQNTYREISSCSSMGDFQARRMQARMRAGQGKPELVHTLNGSGLAVGRTLVAILENYQNADGSVTVPKALQPYMGGITRLEPEA.

Position 240–242 (240–242 (TAE)) interacts with L-serine. Residue 271–273 (RSE) participates in ATP binding. Glu294 contacts L-serine. 358–361 (EISS) contributes to the ATP binding site. Ser393 serves as a coordination point for L-serine.

Belongs to the class-II aminoacyl-tRNA synthetase family. Type-1 seryl-tRNA synthetase subfamily. In terms of assembly, homodimer. The tRNA molecule binds across the dimer.

Its subcellular location is the cytoplasm. It carries out the reaction tRNA(Ser) + L-serine + ATP = L-seryl-tRNA(Ser) + AMP + diphosphate + H(+). It catalyses the reaction tRNA(Sec) + L-serine + ATP = L-seryl-tRNA(Sec) + AMP + diphosphate + H(+). Its pathway is aminoacyl-tRNA biosynthesis; selenocysteinyl-tRNA(Sec) biosynthesis; L-seryl-tRNA(Sec) from L-serine and tRNA(Sec): step 1/1. Functionally, catalyzes the attachment of serine to tRNA(Ser). Is also able to aminoacylate tRNA(Sec) with serine, to form the misacylated tRNA L-seryl-tRNA(Sec), which will be further converted into selenocysteinyl-tRNA(Sec). The polypeptide is Serine--tRNA ligase (Cupriavidus metallidurans (strain ATCC 43123 / DSM 2839 / NBRC 102507 / CH34) (Ralstonia metallidurans)).